Here is a 391-residue protein sequence, read N- to C-terminus: Phosphoglycerate kinase (391 aa).

Substrate-binding positions include 21 to 23 (DLN), Arg36, 59 to 62 (HLGR), Arg114, and Arg147. ATP contacts are provided by residues Lys198, Glu315, and 344-347 (GGDT).

It belongs to the phosphoglycerate kinase family. Monomer.

The protein resides in the cytoplasm. It carries out the reaction (2R)-3-phosphoglycerate + ATP = (2R)-3-phospho-glyceroyl phosphate + ADP. It participates in carbohydrate degradation; glycolysis; pyruvate from D-glyceraldehyde 3-phosphate: step 2/5. The chain is Phosphoglycerate kinase from Haemophilus ducreyi (strain 35000HP / ATCC 700724).